Consider the following 101-residue polypeptide: Apolipoprotein C-II (101 aa).

An N-terminal signal peptide occupies residues 1-22 (MGTRYFLVGFLILLVLGFEVQG). Residues 66-74 (AVDEKIRDI) form a lipid binding region. The lipoprotein lipase cofactor stretch occupies residues 78-101 (STAAVTTYAGIITDQVFSVLSGKD).

This sequence belongs to the apolipoprotein C2 family. Post-translationally, proapolipoprotein C-II is synthesized as a sialic acid containing glycoprotein which is subsequently desialylated prior to its proteolytic processing. In terms of processing, proapolipoprotein C-II undergoes proteolytic cleavage of its N-terminal hexapeptide to generate apolipoprotein C-II. In bovine, proapolipoprotein C-II was found to be the minor form whereas apolipoprotein C-II was found to be the major form in plasma.

The protein localises to the secreted. Its function is as follows. Component of chylomicrons, very low-density lipoproteins (VLDL), low-density lipoproteins (LDL), and high-density lipoproteins (HDL) in plasma. Plays an important role in lipoprotein metabolism as an activator of lipoprotein lipase. Both proapolipoprotein C-II and apolipoprotein C-II can activate lipoprotein lipase. This Bos taurus (Bovine) protein is Apolipoprotein C-II (APOC2).